Reading from the N-terminus, the 240-residue chain is Phosphatidylserine decarboxylase proenzyme (240 aa).

The active-site Schiff-base intermediate with substrate; via pyruvic acid is the Ser-198. Ser-198 is modified (pyruvic acid (Ser); by autocatalysis).

This sequence belongs to the phosphatidylserine decarboxylase family. PSD-A subfamily. Heterodimer of a large membrane-associated beta subunit and a small pyruvoyl-containing alpha subunit. It depends on pyruvate as a cofactor. Is synthesized initially as an inactive proenzyme. Formation of the active enzyme involves a self-maturation process in which the active site pyruvoyl group is generated from an internal serine residue via an autocatalytic post-translational modification. Two non-identical subunits are generated from the proenzyme in this reaction, and the pyruvate is formed at the N-terminus of the alpha chain, which is derived from the carboxyl end of the proenzyme. The post-translation cleavage follows an unusual pathway, termed non-hydrolytic serinolysis, in which the side chain hydroxyl group of the serine supplies its oxygen atom to form the C-terminus of the beta chain, while the remainder of the serine residue undergoes an oxidative deamination to produce ammonia and the pyruvoyl prosthetic group on the alpha chain.

Its subcellular location is the cell membrane. The catalysed reaction is a 1,2-diacyl-sn-glycero-3-phospho-L-serine + H(+) = a 1,2-diacyl-sn-glycero-3-phosphoethanolamine + CO2. The protein operates within phospholipid metabolism; phosphatidylethanolamine biosynthesis; phosphatidylethanolamine from CDP-diacylglycerol: step 2/2. Functionally, catalyzes the formation of phosphatidylethanolamine (PtdEtn) from phosphatidylserine (PtdSer). The sequence is that of Phosphatidylserine decarboxylase proenzyme from Paramagnetospirillum magneticum (strain ATCC 700264 / AMB-1) (Magnetospirillum magneticum).